The primary structure comprises 305 residues: Glycine--tRNA ligase alpha subunit (305 aa).

Belongs to the class-II aminoacyl-tRNA synthetase family. Tetramer of two alpha and two beta subunits.

Its subcellular location is the cytoplasm. It catalyses the reaction tRNA(Gly) + glycine + ATP = glycyl-tRNA(Gly) + AMP + diphosphate. The polypeptide is Glycine--tRNA ligase alpha subunit (Streptococcus pyogenes serotype M12 (strain MGAS2096)).